Reading from the N-terminus, the 461-residue chain is Aspartyl/glutamyl-tRNA(Asn/Gln) amidotransferase subunit B (461 aa).

The protein belongs to the GatB/GatE family. GatB subfamily. In terms of assembly, heterotrimer of A, B and C subunits.

The catalysed reaction is L-glutamyl-tRNA(Gln) + L-glutamine + ATP + H2O = L-glutaminyl-tRNA(Gln) + L-glutamate + ADP + phosphate + H(+). It catalyses the reaction L-aspartyl-tRNA(Asn) + L-glutamine + ATP + H2O = L-asparaginyl-tRNA(Asn) + L-glutamate + ADP + phosphate + 2 H(+). Allows the formation of correctly charged Asn-tRNA(Asn) or Gln-tRNA(Gln) through the transamidation of misacylated Asp-tRNA(Asn) or Glu-tRNA(Gln) in organisms which lack either or both of asparaginyl-tRNA or glutaminyl-tRNA synthetases. The reaction takes place in the presence of glutamine and ATP through an activated phospho-Asp-tRNA(Asn) or phospho-Glu-tRNA(Gln). The sequence is that of Aspartyl/glutamyl-tRNA(Asn/Gln) amidotransferase subunit B from Methanopyrus kandleri (strain AV19 / DSM 6324 / JCM 9639 / NBRC 100938).